A 124-amino-acid chain; its full sequence is Small ribosomal subunit protein uS12 (124 aa).

Position 90 is a 3-methylthioaspartic acid (Asp-90).

Belongs to the universal ribosomal protein uS12 family. Part of the 30S ribosomal subunit. Contacts proteins S8 and S17. May interact with IF1 in the 30S initiation complex.

In terms of biological role, with S4 and S5 plays an important role in translational accuracy. Interacts with and stabilizes bases of the 16S rRNA that are involved in tRNA selection in the A site and with the mRNA backbone. Located at the interface of the 30S and 50S subunits, it traverses the body of the 30S subunit contacting proteins on the other side and probably holding the rRNA structure together. The combined cluster of proteins S8, S12 and S17 appears to hold together the shoulder and platform of the 30S subunit. This is Small ribosomal subunit protein uS12 from Wolbachia sp. subsp. Drosophila simulans (strain wRi).